The following is a 274-amino-acid chain: uncharacterized protein (274 aa).

The disordered stretch occupies residues Glu235–Lys274. A compositionally biased stretch (basic and acidic residues) spans Gln241–Lys274.

This is an uncharacterized protein from Treponema pallidum (strain Nichols).